The following is a 350-amino-acid chain: Heme A synthase (350 aa).

8 helical membrane-spanning segments follow: residues 16–36 (LARW…VGGI), 77–97 (FQLV…IFFW), 101–121 (HRLL…WFWI), 136–156 (LLAL…SGIV), 170–190 (LLVA…LVAL), 201–221 (GIGL…ALVA), 265–285 (VFLV…VLVV), and 299–321 (IVLH…SGVA). Residue histidine 272 coordinates heme. Histidine 328 lines the heme pocket.

This sequence belongs to the COX15/CtaA family. Type 2 subfamily. In terms of assembly, interacts with CtaB. It depends on heme b as a cofactor.

It localises to the cell membrane. The catalysed reaction is Fe(II)-heme o + 2 A + H2O = Fe(II)-heme a + 2 AH2. It participates in porphyrin-containing compound metabolism; heme A biosynthesis; heme A from heme O: step 1/1. In terms of biological role, catalyzes the conversion of heme O to heme A by two successive hydroxylations of the methyl group at C8. The first hydroxylation forms heme I, the second hydroxylation results in an unstable dihydroxymethyl group, which spontaneously dehydrates, resulting in the formyl group of heme A. The polypeptide is Heme A synthase (Novosphingobium aromaticivorans (strain ATCC 700278 / DSM 12444 / CCUG 56034 / CIP 105152 / NBRC 16084 / F199)).